Here is a 192-residue protein sequence, read N- to C-terminus: MNKRDYMNTSVQEPPLDYSFRSIHVIQDLVNEEPRTGLRPLKRSKSGKSLTQSLWLNNNVLNDLRDFNQVASQLLEHPENLAWIDLSFNDLTSIDPVLTTFFNLSVLYLHGNSIQRLGEVNKLAVLPRLRSLTLHGNPMEEEKGYRQYVLCTLSRITTFDFAGVTKADRTTAEVWKRMNIKPKKAWIKRNTL.

LRR repeat units follow at residues 49-71, 80-101, and 103-124; these read SLTQ…NQVA, NLAW…LTTF, and NLSV…NKLA. An LRRCT domain is found at 137 to 175; it reads NPMEEEKGYRQYVLCTLSRITTFDFAGVTKADRTTAEVW.

It is found in the cytoplasm. The sequence is that of Leucine-rich repeat-containing protein 51 from Pan troglodytes (Chimpanzee).